A 35-amino-acid polypeptide reads, in one-letter code: MSDIN-like toxin proprotein 8 (35 aa).

Residues 1–10 constitute a propeptide that is removed on maturation; it reads MSDINATRLP. Residues 11–18 constitute a cross-link (cyclopeptide (Phe-Pro)); that stretch reads FVFVASPP. Residues 19–35 constitute a propeptide that is removed on maturation; it reads CVGDDIAMVLTRGENLC.

This sequence belongs to the MSDIN fungal toxin family. In terms of processing, processed by the macrocyclase-peptidase enzyme POPB to yield a toxic cyclic octapeptide. POPB first removes 10 residues from the N-terminus. Conformational trapping of the remaining peptide forces the enzyme to release this intermediate rather than proceed to macrocyclization. The enzyme rebinds the remaining peptide in a different conformation and catalyzes macrocyclization of the N-terminal 8 residues. Expressed in basidiocarps.

Its function is as follows. Probable toxin that belongs to the MSDIN-like toxin family responsible for a large number of food poisoning cases and deaths. The protein is MSDIN-like toxin proprotein 8 of Amanita exitialis (Guangzhou destroying angel).